The chain runs to 430 residues: CinA-like protein (430 aa).

Belongs to the CinA family.

In Mycobacterium tuberculosis (strain ATCC 25177 / H37Ra), this protein is CinA-like protein.